The following is a 151-amino-acid chain: UPF0178 protein PMI1258 (151 aa).

The protein belongs to the UPF0178 family.

This Proteus mirabilis (strain HI4320) protein is UPF0178 protein PMI1258.